Reading from the N-terminus, the 343-residue chain is Twinfilin (343 aa).

2 consecutive ADF-H domains span residues Glu-11–Arg-135 and Glu-184–His-312. The tract at residues Arg-319–Asp-343 is disordered.

Belongs to the actin-binding proteins ADF family. Twinfilin subfamily. In terms of assembly, interacts with G-actin; ADP-actin form.

The protein localises to the cytoplasm. Its subcellular location is the cytoskeleton. The protein resides in the cell cortex. In terms of biological role, actin-binding protein involved in motile and morphological processes. Inhibits actin polymerization, likely by sequestering G-actin. This chain is Twinfilin (twf), found in Drosophila melanogaster (Fruit fly).